Consider the following 271-residue polypeptide: 5'-nucleotidase SurE (271 aa).

The a divalent metal cation site is built by D14, D15, S46, and N104.

It belongs to the SurE nucleotidase family. A divalent metal cation is required as a cofactor.

The protein resides in the cytoplasm. It carries out the reaction a ribonucleoside 5'-phosphate + H2O = a ribonucleoside + phosphate. Its function is as follows. Nucleotidase that shows phosphatase activity on nucleoside 5'-monophosphates. This chain is 5'-nucleotidase SurE, found in Gloeothece citriformis (strain PCC 7424) (Cyanothece sp. (strain PCC 7424)).